The primary structure comprises 435 residues: Glutamyl-tRNA reductase (435 aa).

Residues Thr-49–Arg-52, Ser-114, Glu-119–Gln-121, and Gln-125 each bind substrate. Residue Cys-50 is the Nucleophile of the active site. Residue Gly-204–Ile-209 participates in NADP(+) binding.

This sequence belongs to the glutamyl-tRNA reductase family. As to quaternary structure, homodimer.

It catalyses the reaction (S)-4-amino-5-oxopentanoate + tRNA(Glu) + NADP(+) = L-glutamyl-tRNA(Glu) + NADPH + H(+). It participates in porphyrin-containing compound metabolism; protoporphyrin-IX biosynthesis; 5-aminolevulinate from L-glutamyl-tRNA(Glu): step 1/2. Its function is as follows. Catalyzes the NADPH-dependent reduction of glutamyl-tRNA(Glu) to glutamate 1-semialdehyde (GSA). The protein is Glutamyl-tRNA reductase of Actinobacillus succinogenes (strain ATCC 55618 / DSM 22257 / CCUG 43843 / 130Z).